Consider the following 257-residue polypeptide: Cytoplasmic envelopment protein 1 (257 aa).

It belongs to the herpesviridae cytoplasmic envelopment protein 1 family.

The protein localises to the virion. It localises to the virion tegument. Its subcellular location is the host cytoplasm. It is found in the host Golgi apparatus. Functionally, plays a critical role in cytoplasmic virus egress. Participates in the final step of tegumentation and envelope acquisition within the host cytoplasm. This Connochaetes taurinus (Blue wildebeest) protein is Cytoplasmic envelopment protein 1 (42).